The sequence spans 65 residues: Large ribosomal subunit protein bL35 (65 aa).

This sequence belongs to the bacterial ribosomal protein bL35 family.

This chain is Large ribosomal subunit protein bL35, found in Borrelia duttonii (strain Ly).